The primary structure comprises 311 residues: Coproporphyrin III ferrochelatase 1 (311 aa).

Residues Y12, R29, 45 to 46 (RY), S53, and Y124 contribute to the Fe-coproporphyrin III site. Fe(2+) is bound by residues H182 and E263.

Belongs to the ferrochelatase family.

The protein resides in the cytoplasm. The enzyme catalyses Fe-coproporphyrin III + 2 H(+) = coproporphyrin III + Fe(2+). Its pathway is porphyrin-containing compound metabolism; protoheme biosynthesis. Its function is as follows. Involved in coproporphyrin-dependent heme b biosynthesis. Catalyzes the insertion of ferrous iron into coproporphyrin III to form Fe-coproporphyrin III. This chain is Coproporphyrin III ferrochelatase 1, found in Bacillus cereus (strain ZK / E33L).